A 192-amino-acid chain; its full sequence is uncharacterized protein (192 aa).

Residues 29–160 (RRQAAVLIPL…PLDIQRRGHD (132 aa)) form the Nudix hydrolase domain. The Nudix box signature appears at 67–89 (GAVDSTDASLIAAALREAHEEVA). Residues Glu-83 and Glu-87 each coordinate Mg(2+).

It belongs to the Nudix hydrolase family. PCD1 subfamily. It depends on Mn(2+) as a cofactor. Requires Mg(2+) as cofactor.

Its function is as follows. Probably mediates the hydrolysis of some nucleoside diphosphate derivatives. This is an uncharacterized protein from Enterobacter sp. (strain 638).